Here is a 199-residue protein sequence, read N- to C-terminus: Recombination protein RecR (199 aa).

The C4-type zinc-finger motif lies at 57–72 (CSQCHNITDTDPCQIC). One can recognise a Toprim domain in the interval 80 to 176 (TTICVVQESR…KVTRLAHGLP (97 aa)).

Belongs to the RecR family.

In terms of biological role, may play a role in DNA repair. It seems to be involved in an RecBC-independent recombinational process of DNA repair. It may act with RecF and RecO. In Shouchella clausii (strain KSM-K16) (Alkalihalobacillus clausii), this protein is Recombination protein RecR.